Consider the following 163-residue polypeptide: Urease accessory protein UreE (163 aa).

The segment at 130 to 163 (PFEPEPGAYGGGHGHTHSHDHSHQHDPAGHAHEH) is disordered. A compositionally biased stretch (basic and acidic residues) spans 146–163 (HSHDHSHQHDPAGHAHEH).

The protein belongs to the UreE family.

Its subcellular location is the cytoplasm. In terms of biological role, involved in urease metallocenter assembly. Binds nickel. Probably functions as a nickel donor during metallocenter assembly. This Alkalilimnicola ehrlichii (strain ATCC BAA-1101 / DSM 17681 / MLHE-1) protein is Urease accessory protein UreE.